The sequence spans 347 residues: Phosphoribosylformylglycinamidine cyclo-ligase (347 aa).

The protein belongs to the AIR synthase family.

The protein localises to the cytoplasm. The catalysed reaction is 2-formamido-N(1)-(5-O-phospho-beta-D-ribosyl)acetamidine + ATP = 5-amino-1-(5-phospho-beta-D-ribosyl)imidazole + ADP + phosphate + H(+). It participates in purine metabolism; IMP biosynthesis via de novo pathway; 5-amino-1-(5-phospho-D-ribosyl)imidazole from N(2)-formyl-N(1)-(5-phospho-D-ribosyl)glycinamide: step 2/2. The sequence is that of Phosphoribosylformylglycinamidine cyclo-ligase from Prochlorococcus marinus (strain MIT 9215).